Here is a 398-residue protein sequence, read N- to C-terminus: MLPMSDTRSSRIKPMTLNFGPQHPAAHGVMRLILEMSGEVIERIDPHIGLLHRGTEKLIEYKTYLQALPYFDRLDYVSPMSQEHAYSLCVEKLLQCVVPPRAKYIRVIFCELTRVLNHLLNVSSQALDTGATTPLLWMFEERERLLSFYERASGARFHAAYIRPGGIAADVPDGLLDDIHAFTESFPKLLDDVDGLLTENSIWKQRNVDIGVVSKAQALDWGFSGPMLRACGIPWDLRKSQPYEIYETLDFKVPVGSNGDCYDRYLVRMAEMRESISIIRQCLNGIPEGPVKTDDRKIAPPRREELKYSMEALIHHFKLFSEGYKVPEGEAYVAVEAPKGEFGVYIVSDGTNRPYRCRIRAPGFAHLQAIDAMARGHMLADLTAIIGSLDIVFGEIDR.

Belongs to the complex I 49 kDa subunit family. As to quaternary structure, NDH-1 is composed of 14 different subunits. Subunits NuoB, C, D, E, F, and G constitute the peripheral sector of the complex.

It is found in the cell inner membrane. It catalyses the reaction a quinone + NADH + 5 H(+)(in) = a quinol + NAD(+) + 4 H(+)(out). Functionally, NDH-1 shuttles electrons from NADH, via FMN and iron-sulfur (Fe-S) centers, to quinones in the respiratory chain. The immediate electron acceptor for the enzyme in this species is believed to be ubiquinone. Couples the redox reaction to proton translocation (for every two electrons transferred, four hydrogen ions are translocated across the cytoplasmic membrane), and thus conserves the redox energy in a proton gradient. The polypeptide is NADH-quinone oxidoreductase subunit D (Anaplasma marginale (strain St. Maries)).